The primary structure comprises 292 residues: Bifunctional protein FolD 2 (292 aa).

NADP(+) contacts are provided by residues 166-168 (GHS) and Ile-232.

Belongs to the tetrahydrofolate dehydrogenase/cyclohydrolase family. As to quaternary structure, homodimer.

It carries out the reaction (6R)-5,10-methylene-5,6,7,8-tetrahydrofolate + NADP(+) = (6R)-5,10-methenyltetrahydrofolate + NADPH. The catalysed reaction is (6R)-5,10-methenyltetrahydrofolate + H2O = (6R)-10-formyltetrahydrofolate + H(+). It functions in the pathway one-carbon metabolism; tetrahydrofolate interconversion. Catalyzes the oxidation of 5,10-methylenetetrahydrofolate to 5,10-methenyltetrahydrofolate and then the hydrolysis of 5,10-methenyltetrahydrofolate to 10-formyltetrahydrofolate. The chain is Bifunctional protein FolD 2 from Ruegeria pomeroyi (strain ATCC 700808 / DSM 15171 / DSS-3) (Silicibacter pomeroyi).